The following is a 520-amino-acid chain: Glutamate decarboxylase-like protein FG08083 (520 aa).

Position 86-88 (86-88 (KLV)) interacts with substrate. Lys300 is modified (N6-(pyridoxal phosphate)lysine). Positions 338 to 357 (KNGVSSEQSANTNGSEKESW) are disordered. The segment covering 340–351 (GVSSEQSANTNG) has biased composition (polar residues). Arg492 lines the substrate pocket.

The protein belongs to the group II decarboxylase family. Pyridoxal 5'-phosphate serves as cofactor.

It functions in the pathway mycotoxin biosynthesis. Its function is as follows. Glutamate decarboxylase-like protein; part of the gene cluster that mediates the biosynthesis of butenolide, a mycotoxin that shows antibiotic activity but does not seem to play a major role in the spread of head blight in wheat. Butenolide is derived from glutamic acid via a 4-acetamido-2-butenoic acid intermediate. The predicted function of the NADH:flavin oxidoreductase FG08077, the cytochrome P450 monooxygenase FG08079, the decarboxylase FG08083, and the putative acetyltransferase FG08082 are consistent with this pathway, however, the respective activities of the butelonide biosynthesis cluster enzymes have still to be experimentally determined. This is Glutamate decarboxylase-like protein FG08083 from Gibberella zeae (strain ATCC MYA-4620 / CBS 123657 / FGSC 9075 / NRRL 31084 / PH-1) (Wheat head blight fungus).